The following is a 230-amino-acid chain: Cytochrome c oxidase subunit 2 (230 aa).

The Mitochondrial intermembrane portion of the chain corresponds to 1-14; that stretch reads MAHPSQLGFQDAAS. A helical membrane pass occupies residues 15–45; sequence PVMEELLHFHDHTLMIVFLISTLVLYIIMAM. Topologically, residues 46–59 are mitochondrial matrix; it reads VSTKLTNKYILDSQ. The helical transmembrane segment at 60–87 threads the bilayer; it reads EIEIVWTILPAVILIMIALPSLRILYLM. Over 88–230 the chain is Mitochondrial intermembrane; the sequence is DEINDPHLTI…SWSSLMLEEA (143 aa). Residues H161, C196, E198, C200, H204, and M207 each coordinate Cu cation. E198 serves as a coordination point for Mg(2+).

The protein belongs to the cytochrome c oxidase subunit 2 family. As to quaternary structure, component of the cytochrome c oxidase (complex IV, CIV), a multisubunit enzyme composed of 14 subunits. The complex is composed of a catalytic core of 3 subunits MT-CO1, MT-CO2 and MT-CO3, encoded in the mitochondrial DNA, and 11 supernumerary subunits COX4I, COX5A, COX5B, COX6A, COX6B, COX6C, COX7A, COX7B, COX7C, COX8 and NDUFA4, which are encoded in the nuclear genome. The complex exists as a monomer or a dimer and forms supercomplexes (SCs) in the inner mitochondrial membrane with NADH-ubiquinone oxidoreductase (complex I, CI) and ubiquinol-cytochrome c oxidoreductase (cytochrome b-c1 complex, complex III, CIII), resulting in different assemblies (supercomplex SCI(1)III(2)IV(1) and megacomplex MCI(2)III(2)IV(2)). Found in a complex with TMEM177, COA6, COX18, COX20, SCO1 and SCO2. Interacts with TMEM177 in a COX20-dependent manner. Interacts with COX20. Interacts with COX16. Requires Cu cation as cofactor.

It localises to the mitochondrion inner membrane. It carries out the reaction 4 Fe(II)-[cytochrome c] + O2 + 8 H(+)(in) = 4 Fe(III)-[cytochrome c] + 2 H2O + 4 H(+)(out). In terms of biological role, component of the cytochrome c oxidase, the last enzyme in the mitochondrial electron transport chain which drives oxidative phosphorylation. The respiratory chain contains 3 multisubunit complexes succinate dehydrogenase (complex II, CII), ubiquinol-cytochrome c oxidoreductase (cytochrome b-c1 complex, complex III, CIII) and cytochrome c oxidase (complex IV, CIV), that cooperate to transfer electrons derived from NADH and succinate to molecular oxygen, creating an electrochemical gradient over the inner membrane that drives transmembrane transport and the ATP synthase. Cytochrome c oxidase is the component of the respiratory chain that catalyzes the reduction of oxygen to water. Electrons originating from reduced cytochrome c in the intermembrane space (IMS) are transferred via the dinuclear copper A center (CU(A)) of subunit 2 and heme A of subunit 1 to the active site in subunit 1, a binuclear center (BNC) formed by heme A3 and copper B (CU(B)). The BNC reduces molecular oxygen to 2 water molecules using 4 electrons from cytochrome c in the IMS and 4 protons from the mitochondrial matrix. This Squalus acanthias (Spiny dogfish) protein is Cytochrome c oxidase subunit 2 (MT-CO2).